The chain runs to 91 residues: Small ribosomal subunit protein bS20 (91 aa).

The segment covering 1-18 (MPLHKSAEKRLRQSERRN) has biased composition (basic and acidic residues). Residues 1–25 (MPLHKSAEKRLRQSERRNARNRARK) are disordered.

This sequence belongs to the bacterial ribosomal protein bS20 family.

In terms of biological role, binds directly to 16S ribosomal RNA. The sequence is that of Small ribosomal subunit protein bS20 from Chlorobium luteolum (strain DSM 273 / BCRC 81028 / 2530) (Pelodictyon luteolum).